We begin with the raw amino-acid sequence, 159 residues long: SsrA-binding protein (159 aa).

It belongs to the SmpB family.

It localises to the cytoplasm. Its function is as follows. Required for rescue of stalled ribosomes mediated by trans-translation. Binds to transfer-messenger RNA (tmRNA), required for stable association of tmRNA with ribosomes. tmRNA and SmpB together mimic tRNA shape, replacing the anticodon stem-loop with SmpB. tmRNA is encoded by the ssrA gene; the 2 termini fold to resemble tRNA(Ala) and it encodes a 'tag peptide', a short internal open reading frame. During trans-translation Ala-aminoacylated tmRNA acts like a tRNA, entering the A-site of stalled ribosomes, displacing the stalled mRNA. The ribosome then switches to translate the ORF on the tmRNA; the nascent peptide is terminated with the 'tag peptide' encoded by the tmRNA and targeted for degradation. The ribosome is freed to recommence translation, which seems to be the essential function of trans-translation. The polypeptide is SsrA-binding protein (Dichelobacter nodosus (strain VCS1703A)).